We begin with the raw amino-acid sequence, 337 residues long: Glutathione transferase 3 (337 aa).

Over 1-239 (MPTKSTFSRW…NKYQYTLDFC (239 aa)) the chain is Cytoplasmic. Residues serine 66, serine 72, serine 99, and serine 116 each carry the phosphoserine modification. Positions 66–95 (SMTVDQSKDERNEYGSGSGNGSGSGSCDTA) are disordered. Positions 107–132 (KEDDDEKPQSGDETSATKPLSSRNAN) are disordered. Residues 117–132 (GDETSATKPLSSRNAN) show a composition bias toward polar residues. Residues 240–260 (LPILTWLLFFRGIPTLVSYYI) traverse the membrane as a helical segment. At 261-313 (NFIRYDLNIELDPMTFNLTKFLISLAIFKTCNNKNIDFHSFRCVNQLWTQLCT) the chain is on the perinuclear space side. The chain crosses the membrane as a helical span at residues 314 to 336 (VNRSLGMVPLVFSMVSCLLTLYV). Position 337 (leucine 337) is a topological domain, cytoplasmic.

It is found in the nucleus membrane. The polypeptide is Glutathione transferase 3 (GTT3) (Saccharomyces cerevisiae (strain ATCC 204508 / S288c) (Baker's yeast)).